The primary structure comprises 182 residues: NADH-quinone oxidoreductase subunit I (182 aa).

2 4Fe-4S ferredoxin-type domains span residues 52 to 82 (LTRD…LQKA) and 92 to 121 (DFFR…LTPD). [4Fe-4S] cluster-binding residues include Cys62, Cys65, Cys68, Cys72, Cys101, Cys104, Cys107, and Cys111.

It belongs to the complex I 23 kDa subunit family. NDH-1 is composed of 13 different subunits. Subunits NuoA, H, J, K, L, M, N constitute the membrane sector of the complex. [4Fe-4S] cluster is required as a cofactor.

Its subcellular location is the cell inner membrane. It catalyses the reaction a quinone + NADH + 5 H(+)(in) = a quinol + NAD(+) + 4 H(+)(out). Its function is as follows. NDH-1 shuttles electrons from NADH, via FMN and iron-sulfur (Fe-S) centers, to quinones in the respiratory chain. The immediate electron acceptor for the enzyme in this species is believed to be ubiquinone. Couples the redox reaction to proton translocation (for every two electrons transferred, four hydrogen ions are translocated across the cytoplasmic membrane), and thus conserves the redox energy in a proton gradient. This Pseudomonas fluorescens (strain ATCC BAA-477 / NRRL B-23932 / Pf-5) protein is NADH-quinone oxidoreductase subunit I.